A 455-amino-acid chain; its full sequence is MALNVVILAAGKGTRMRSELPKVLHPIAHKSMVQHVIDTAHSVGSDAIQLVYGYGAEKLQSVLGEQQLNWVLQAEQLGTGHAVAQANDNIGDDDTVLILYGDVPLIQASTLEALLAAREDNGLAILTVNLANPMGYGRIVREANKVVGIVEQKDASAEQLAINEINTGIMAAPGKQLKAWLGQLSSDNAQGEYYLTDIVAMAHKDGVEITTAQPESAIEVEGANNRVQLAQLERAYQARAAEKLMLEGANLRDPARLDIRGDVTVGMDVMIDINVIIQGKVTIGNNVTIGAGAILIDCEIGDNAEIKPYSIVENAKLGVEASAGPFARLRPGAELKRDAHIGNFVEMKKAVLGEGSKAGHLAYIGDAQIGCGVNIGAGTITCNYDGANKHLTVIEDNVFVGSDTQLVAPVTIGKGATLGAGSTITSNVAEGELVITRVKQRHLTGWARPVKKPKS.

Positions 1-226 are pyrophosphorylase; that stretch reads MALNVVILAA…AIEVEGANNR (226 aa). UDP-N-acetyl-alpha-D-glucosamine-binding positions include 8–11, lysine 22, glutamine 73, 78–79, 100–102, glycine 137, glutamate 151, asparagine 166, and asparagine 224; these read LAAG, GT, and YGD. Aspartate 102 contacts Mg(2+). A Mg(2+)-binding site is contributed by asparagine 224. Residues 227–247 are linker; it reads VQLAQLERAYQARAAEKLMLE. Residues 248-455 are N-acetyltransferase; the sequence is GANLRDPARL…WARPVKKPKS (208 aa). UDP-N-acetyl-alpha-D-glucosamine contacts are provided by arginine 330 and lysine 348. Histidine 360 acts as the Proton acceptor in catalysis. The UDP-N-acetyl-alpha-D-glucosamine site is built by tyrosine 363 and asparagine 374. Residues alanine 377, 383–384, serine 402, alanine 420, and arginine 437 each bind acetyl-CoA; that span reads NY.

It in the N-terminal section; belongs to the N-acetylglucosamine-1-phosphate uridyltransferase family. The protein in the C-terminal section; belongs to the transferase hexapeptide repeat family. In terms of assembly, homotrimer. The cofactor is Mg(2+).

It is found in the cytoplasm. The enzyme catalyses alpha-D-glucosamine 1-phosphate + acetyl-CoA = N-acetyl-alpha-D-glucosamine 1-phosphate + CoA + H(+). It carries out the reaction N-acetyl-alpha-D-glucosamine 1-phosphate + UTP + H(+) = UDP-N-acetyl-alpha-D-glucosamine + diphosphate. It functions in the pathway nucleotide-sugar biosynthesis; UDP-N-acetyl-alpha-D-glucosamine biosynthesis; N-acetyl-alpha-D-glucosamine 1-phosphate from alpha-D-glucosamine 6-phosphate (route II): step 2/2. Its pathway is nucleotide-sugar biosynthesis; UDP-N-acetyl-alpha-D-glucosamine biosynthesis; UDP-N-acetyl-alpha-D-glucosamine from N-acetyl-alpha-D-glucosamine 1-phosphate: step 1/1. The protein operates within bacterial outer membrane biogenesis; LPS lipid A biosynthesis. Catalyzes the last two sequential reactions in the de novo biosynthetic pathway for UDP-N-acetylglucosamine (UDP-GlcNAc). The C-terminal domain catalyzes the transfer of acetyl group from acetyl coenzyme A to glucosamine-1-phosphate (GlcN-1-P) to produce N-acetylglucosamine-1-phosphate (GlcNAc-1-P), which is converted into UDP-GlcNAc by the transfer of uridine 5-monophosphate (from uridine 5-triphosphate), a reaction catalyzed by the N-terminal domain. The protein is Bifunctional protein GlmU of Shewanella sediminis (strain HAW-EB3).